The primary structure comprises 472 residues: MADMRNLVERLERVVGRLEAVSHASDTHCGYGDSAAKAGTTPYVQAFDSLLAGPVAEYLKISKEIGGDVQKHAEMVHTGLKLERALLVTASQCQQPAGNKLSDLLAPISEQIQEVVTFREKNRGSKLFNHLSAVSESIQALGWVAMAPKPGPYVKEMNDAAMFYTNRVLKEYKDVDKKHVDWVKAYLSIWTELQAYIKEFHTTGLAWSRTGPVAKELSGLPSGPSAGSGPPPPPPGPPPPPVPTSSGSDDSASRSALFAQINQGESITHALKHVSDDMKTHKNPALKAQSGLIRSGPKPFSASKPDPPKPVAKKEPALLELEGKKWRVENQENVSNLMIEDTELKQVAYIFKCVNSTLQIKGKINSITVDNCKKLGLVFDDVVGIVEIINSKDVKVQVMGKVPTISINKTDGCHVYLSKNSLDCEIVSAKSSEMNVLIPTEGGDFNEFPVPEQFKTLWNGQKLVTTVTEIAG.

Ala2 carries the N-acetylalanine modification. Tyr31 is modified (phosphotyrosine). Phosphoserine is present on Ser34. N6-acetyllysine is present on Lys81. The interval 216 to 253 is disordered; it reads ELSGLPSGPSAGSGPPPPPPGPPPPPVPTSSGSDDSAS. Residues 218–228 are compositionally biased toward low complexity; it reads SGLPSGPSAGS. Over residues 229-243 the composition is skewed to pro residues; that stretch reads GPPPPPPGPPPPPVP. Over residues 244–253 the composition is skewed to low complexity; that stretch reads TSSGSDDSAS. Position 287 is an N6-methyllysine (Lys287). Residues Ser290, Ser295, and Ser301 each carry the phosphoserine modification. Residues 290–312 are disordered; the sequence is SGLIRSGPKPFSASKPDPPKPVA. One can recognise a C-CAP/cofactor C-like domain in the interval 307 to 450; the sequence is PPKPVAKKEP…EGGDFNEFPV (144 aa). Lys345 is covalently cross-linked (Glycyl lysine isopeptide (Lys-Gly) (interchain with G-Cter in SUMO1)).

This sequence belongs to the CAP family. In terms of assembly, homodimer. Binds actin monomers.

It localises to the cell membrane. Functionally, directly regulates filament dynamics and has been implicated in a number of complex developmental and morphological processes, including mRNA localization and the establishment of cell polarity. This is Adenylyl cyclase-associated protein 1 (CAP1) from Bos taurus (Bovine).